We begin with the raw amino-acid sequence, 235 residues long: Protein RESISTANCE TO PHYTOPHTHORA 1, chloroplastic (235 aa).

A chloroplast-targeting transit peptide spans 1–43 (MNSATTMSASVLNYQILKFFPPQKNGFLKSPLIRGKICRFCVS). Over residues 53–66 (VIEDPKEETQEKSD) the composition is skewed to basic and acidic residues. Residues 53–92 (VIEDPKEETQEKSDGVIVNSTEEEEERSGENSTSTGPSTV) form a disordered region. 4 consecutive transmembrane segments (helical) span residues 131-151 (FEVQAYASMLIGGALSFNLIF), 158-178 (IWRLMGMWSIWMFTIPSLRAR), 188-208 (LNYLFLLVPLLNVAIPFFLKS), and 211-231 (VVWSADTVAFLGMYAWKLGWL).

The protein localises to the plastid. It is found in the chloroplast. Its subcellular location is the membrane. In terms of biological role, plays a positive role in the immune response to the oomycetes P.infestans, including induced oxidative burst and enhanced expression of defense-related genes. This is Protein RESISTANCE TO PHYTOPHTHORA 1, chloroplastic from Solanum tuberosum (Potato).